Consider the following 271-residue polypeptide: Ribosomal RNA small subunit methyltransferase A (271 aa).

6 residues coordinate S-adenosyl-L-methionine: histidine 11, leucine 13, glycine 38, glutamate 58, aspartate 86, and asparagine 101.

It belongs to the class I-like SAM-binding methyltransferase superfamily. rRNA adenine N(6)-methyltransferase family. RsmA subfamily.

The protein localises to the cytoplasm. The enzyme catalyses adenosine(1518)/adenosine(1519) in 16S rRNA + 4 S-adenosyl-L-methionine = N(6)-dimethyladenosine(1518)/N(6)-dimethyladenosine(1519) in 16S rRNA + 4 S-adenosyl-L-homocysteine + 4 H(+). Functionally, specifically dimethylates two adjacent adenosines (A1518 and A1519) in the loop of a conserved hairpin near the 3'-end of 16S rRNA in the 30S particle. May play a critical role in biogenesis of 30S subunits. The polypeptide is Ribosomal RNA small subunit methyltransferase A (Helicobacter pylori (strain P12)).